A 468-amino-acid chain; its full sequence is Lactate utilization protein B (468 aa).

4Fe-4S ferredoxin-type domains lie at 303 to 333 (GTQF…GHAY) and 352 to 381 (YENY…LHEL). [4Fe-4S] cluster contacts are provided by Cys-312, Cys-315, Cys-318, Cys-322, Cys-365, Cys-368, and Cys-372. The segment at 442–468 (PAWTDSKDLPQPNKQTVRDWFKKRGNA) is disordered. The segment covering 457-468 (TVRDWFKKRGNA) has biased composition (basic and acidic residues).

Belongs to the LutB/YkgF family.

Functionally, is involved in L-lactate degradation and allows cells to grow with lactate as the sole carbon source. Has probably a role as an electron transporter during oxidation of L-lactate. This is Lactate utilization protein B from Exiguobacterium sp. (strain ATCC BAA-1283 / AT1b).